The sequence spans 485 residues: Polyol:NADP oxidoreductase (485 aa).

It belongs to the mannitol dehydrogenase family.

It is found in the cytoplasm. This chain is Polyol:NADP oxidoreductase (por), found in Gluconobacter oxydans (strain 621H) (Gluconobacter suboxydans).